The sequence spans 1214 residues: Receptor-type guanylate cyclase gcy-19 (1214 aa).

Residues 1 to 18 (MEHLIFLLIFGGYSPSIA) form the signal peptide. The Extracellular portion of the chain corresponds to 19–517 (QITSSTTTTT…PQTFVDQYGA (499 aa)). Residues asparagine 85, asparagine 363, asparagine 441, and asparagine 464 are each glycosylated (N-linked (GlcNAc...) asparagine). Residues 518–538 (LVFSIGGVLALAMLFLITCFF) form a helical membrane-spanning segment. The Cytoplasmic portion of the chain corresponds to 539–1214 (YVLRQRKLER…FRRQETLALM (676 aa)). The 288-residue stretch at 572–859 (RMSKRSIQSG…KGNLMDHVFN (288 aa)) folds into the Protein kinase domain. Residues 917–1047 (TVFFSDVVKF…DTVNTASRME (131 aa)) enclose the Guanylate cyclase domain. The disordered stretch occupies residues 1116–1197 (NSSNMAYNPE…EKAREIHNEE (82 aa)). Over residues 1133-1142 (DDEDVDDESS) the composition is skewed to acidic residues. A compositionally biased stretch (basic and acidic residues) spans 1186–1197 (LEEKAREIHNEE).

This sequence belongs to the adenylyl cyclase class-4/guanylyl cyclase family. Expressed asymmetrically in ASE right (ASER) sensory neuron.

It localises to the cell membrane. It carries out the reaction GTP = 3',5'-cyclic GMP + diphosphate. In terms of biological role, guanylate cyclase involved in the production of the second messenger cGMP. This is Receptor-type guanylate cyclase gcy-19 from Caenorhabditis briggsae.